A 91-amino-acid polypeptide reads, in one-letter code: Putative membrane protein insertion efficiency factor (91 aa).

The segment at 72–91 (SGGNDPVPEKLTHINHQHEK) is disordered. The segment covering 78–91 (VPEKLTHINHQHEK) has biased composition (basic and acidic residues).

The protein belongs to the UPF0161 family.

Its subcellular location is the cell inner membrane. Could be involved in insertion of integral membrane proteins into the membrane. The sequence is that of Putative membrane protein insertion efficiency factor from Pseudoalteromonas translucida (strain TAC 125).